The following is a 228-amino-acid chain: Elongation factor 1-beta 1 (228 aa).

N-acetylalanine is present on Ala-2. One can recognise a GST C-terminal domain in the interval 14–65 (LKTLEEHLAGKTYISGDQLSVDDVKVYAAVLENPGDGFPNASKWYDSVASHL). The tract at residues 75–139 (GVRVGGGVAP…DTKKTKESGK (65 aa)) is disordered. A compositionally biased stretch (acidic residues) spans 95 to 115 (PAADGDGDDDDDIDLFADETE). Basic and acidic residues predominate over residues 116 to 138 (DEKKAAEEREAAKKDTKKTKESG).

This sequence belongs to the EF-1-beta/EF-1-delta family. As to quaternary structure, EF-1 is composed of 4 subunits: alpha, beta (1B-alpha=beta'), delta (1B-beta), and gamma (1B-gamma).

Its subcellular location is the cell membrane. In terms of biological role, EF-1-beta and EF-1-delta stimulate the exchange of GDP bound to EF-1-alpha to GTP. The polypeptide is Elongation factor 1-beta 1 (Arabidopsis thaliana (Mouse-ear cress)).